Reading from the N-terminus, the 322-residue chain is Beta-ketoacyl-[acyl-carrier-protein] synthase III (322 aa).

Residues Cys112 and His249 contribute to the active site. The tract at residues 250–254 is ACP-binding; sequence QANQR. The active site involves Asn279.

It belongs to the thiolase-like superfamily. FabH family. In terms of assembly, homodimer.

It is found in the cytoplasm. The catalysed reaction is malonyl-[ACP] + acetyl-CoA + H(+) = 3-oxobutanoyl-[ACP] + CO2 + CoA. It participates in lipid metabolism; fatty acid biosynthesis. Its function is as follows. Catalyzes the condensation reaction of fatty acid synthesis by the addition to an acyl acceptor of two carbons from malonyl-ACP. Catalyzes the first condensation reaction which initiates fatty acid synthesis and may therefore play a role in governing the total rate of fatty acid production. Possesses both acetoacetyl-ACP synthase and acetyl transacylase activities. Its substrate specificity determines the biosynthesis of branched-chain and/or straight-chain of fatty acids. In Caulobacter vibrioides (strain ATCC 19089 / CIP 103742 / CB 15) (Caulobacter crescentus), this protein is Beta-ketoacyl-[acyl-carrier-protein] synthase III.